An 83-amino-acid polypeptide reads, in one-letter code: Three-finger toxin MALT0052C (83 aa).

The signal sequence occupies residues 1–21 (MKTLLLTLVVVTIVCLDFGHT). Cystine bridges form between Cys-24–Cys-45, Cys-38–Cys-62, Cys-64–Cys-75, and Cys-76–Cys-81.

It belongs to the three-finger toxin family. Short-chain subfamily. Type I alpha-neurotoxin sub-subfamily. In terms of tissue distribution, expressed by the venom gland.

It localises to the secreted. In terms of biological role, binds to muscle nicotinic acetylcholine receptor (nAChR) and inhibit acetylcholine from binding to the receptor, thereby impairing neuromuscular transmission. The chain is Three-finger toxin MALT0052C from Micrurus altirostris (Uruguayan coral snake).